Reading from the N-terminus, the 589-residue chain is Aspartate--tRNA ligase (589 aa).

E172 contributes to the L-aspartate binding site. Residues 196–199 (QLFK) form an aspartate region. An L-aspartate-binding site is contributed by R218. ATP is bound by residues 218 to 220 (RDE) and Q227. An L-aspartate-binding site is contributed by H449. E483 contributes to the ATP binding site. L-aspartate is bound at residue R490. 535–538 (GLDR) provides a ligand contact to ATP.

This sequence belongs to the class-II aminoacyl-tRNA synthetase family. Type 1 subfamily. Homodimer.

The protein localises to the cytoplasm. The catalysed reaction is tRNA(Asp) + L-aspartate + ATP = L-aspartyl-tRNA(Asp) + AMP + diphosphate. Functionally, catalyzes the attachment of L-aspartate to tRNA(Asp) in a two-step reaction: L-aspartate is first activated by ATP to form Asp-AMP and then transferred to the acceptor end of tRNA(Asp). The polypeptide is Aspartate--tRNA ligase (Actinobacillus succinogenes (strain ATCC 55618 / DSM 22257 / CCUG 43843 / 130Z)).